A 128-amino-acid chain; its full sequence is Dehydrin Xero 1 (128 aa).

Polar residues predominate over residues 1-19 (MESYQNQSGAQQTHQQLDQ). Positions 1–128 (MESYQNQSGA…IKEKLPGGHH (128 aa)) are disordered. 2 stretches are compositionally biased toward low complexity: residues 23–41 (PFPA…PAVA) and 48–60 (GMLH…SSSS). Over residues 75–91 (GITEKIKEKLPGHHDSN) the composition is skewed to basic and acidic residues. Polar residues predominate over residues 92 to 104 (KTSSLGSTTTAYD). The segment covering 107-128 (TVHHEKKGMMEKIKEKLPGGHH) has biased composition (basic and acidic residues).

This sequence belongs to the plant dehydrin family.

This chain is Dehydrin Xero 1 (XERO1), found in Arabidopsis thaliana (Mouse-ear cress).